The primary structure comprises 440 residues: Transposon Ty1-PR2 Gag polyprotein (440 aa).

3 stretches are compositionally biased toward polar residues: residues methionine 1–proline 10, threonine 48–serine 60, and glutamine 127–phenylalanine 152. 3 disordered regions span residues methionine 1–glutamine 93, proline 126–proline 173, and glycine 352–tyrosine 440. Residues threonine 153–threonine 165 are compositionally biased toward low complexity. Residues asparagine 299–histidine 401 are RNA-binding. Positions asparagine 402–serine 418 are enriched in low complexity. The residue at position 416 (serine 416) is a Phosphoserine. Residues lysine 419–asparagine 428 are compositionally biased toward polar residues. Basic and acidic residues predominate over residues asparagine 429 to tyrosine 440.

As to quaternary structure, homotrimer.

The protein resides in the cytoplasm. Capsid protein (CA) is the structural component of the virus-like particle (VLP), forming the shell that encapsulates the retrotransposons dimeric RNA genome. The particles are assembled from trimer-clustered units and there are holes in the capsid shells that allow for the diffusion of macromolecules. CA also has nucleocapsid-like chaperone activity, promoting primer tRNA(i)-Met annealing to the multipartite primer-binding site (PBS), dimerization of Ty1 RNA and initiation of reverse transcription. The sequence is that of Transposon Ty1-PR2 Gag polyprotein (TY1A-PR2) from Saccharomyces cerevisiae (strain ATCC 204508 / S288c) (Baker's yeast).